The chain runs to 96 residues: Large ribosomal subunit protein uL23 (96 aa).

The protein belongs to the universal ribosomal protein uL23 family. Part of the 50S ribosomal subunit. Contacts protein L29, and trigger factor when it is bound to the ribosome.

In terms of biological role, one of the early assembly proteins it binds 23S rRNA. One of the proteins that surrounds the polypeptide exit tunnel on the outside of the ribosome. Forms the main docking site for trigger factor binding to the ribosome. In Caldanaerobacter subterraneus subsp. tengcongensis (strain DSM 15242 / JCM 11007 / NBRC 100824 / MB4) (Thermoanaerobacter tengcongensis), this protein is Large ribosomal subunit protein uL23.